A 275-amino-acid chain; its full sequence is 2-dehydro-3-deoxyphosphooctonate aldolase (275 aa).

It belongs to the KdsA family.

It localises to the cytoplasm. It carries out the reaction D-arabinose 5-phosphate + phosphoenolpyruvate + H2O = 3-deoxy-alpha-D-manno-2-octulosonate-8-phosphate + phosphate. The protein operates within carbohydrate biosynthesis; 3-deoxy-D-manno-octulosonate biosynthesis; 3-deoxy-D-manno-octulosonate from D-ribulose 5-phosphate: step 2/3. It functions in the pathway bacterial outer membrane biogenesis; lipopolysaccharide biosynthesis. The sequence is that of 2-dehydro-3-deoxyphosphooctonate aldolase from Francisella tularensis subsp. holarctica (strain LVS).